Consider the following 139-residue polypeptide: 3-hydroxyacyl-[acyl-carrier-protein] dehydratase FabZ (139 aa).

H47 is a catalytic residue.

This sequence belongs to the thioester dehydratase family. FabZ subfamily.

It localises to the cytoplasm. It catalyses the reaction a (3R)-hydroxyacyl-[ACP] = a (2E)-enoyl-[ACP] + H2O. Involved in unsaturated fatty acids biosynthesis. Catalyzes the dehydration of short chain beta-hydroxyacyl-ACPs and long chain saturated and unsaturated beta-hydroxyacyl-ACPs. The polypeptide is 3-hydroxyacyl-[acyl-carrier-protein] dehydratase FabZ (Clostridium perfringens (strain ATCC 13124 / DSM 756 / JCM 1290 / NCIMB 6125 / NCTC 8237 / Type A)).